We begin with the raw amino-acid sequence, 606 residues long: MPSCQPGKMPAPWPWWLQLLLCIPSCVAVLPGRAGELKVSTQTGSVRGLSLPVLDGHVSAFLGIPFAEPPLGRMRFLRPEPVKPWQHVLDATSYKPACYQMVDTSYPGFQGTEMWNPNRGMSEDCLYLNIWVPSPRPKDAPVLVWIYGGGFYSGAASLDVYDGRFLTYTQNVILVSLSYRVGAFGFLGLPGSPEAPGNMGLLDQRLALQWIQNNIHPFGGNPRAVTVFGESAGAASVGMHLLSTQSRTLFQRAILQSGGPNAPWATVTPAESRGRAALLGKQLGCHFNNDSELVSCLRSKNPQELIDEEWSVLPYKSIFRFPFVPVIDGDFFPDTPEAMLSSGNFKETQVLLGVVKDEGSYFLIYGLPGFSKDNESLISRADFLEGVRMSVPHANDIATDAVVLQYTDWQDQDNREKNREALDDIVGDHNVICPVVQFANDYAKRNSKVYAYLFDHRASNLLWPPWMGVPHGYEIEFVFGLPLNDSLNYTPQEKELSRRMMRYWANFARTGNPTDPADKSGAWPTYTASQPQYVQLNTQPLATQPSLRAQICAFWNHFLPKLLNATDNIEEAERQWKLEFHLWSAYMMHWKSQFDHYNKQDRCSEL.

An N-terminal signal peptide occupies residues 1-28; it reads MPSCQPGKMPAPWPWWLQLLLCIPSCVA. A disulfide bridge links cysteine 98 with cysteine 125. Serine 231 functions as the Acyl-ester intermediate in the catalytic mechanism. The cysteines at positions 285 and 296 are disulfide-linked. N-linked (GlcNAc...) asparagine glycosylation occurs at asparagine 289. Glutamate 358 serves as the catalytic Charge relay system. Asparagine 374 carries N-linked (GlcNAc...) asparagine glycosylation. Cysteine 433 and cysteine 552 are joined by a disulfide. Histidine 471 acts as the Charge relay system in catalysis. N-linked (GlcNAc...) asparagine glycosylation is present at asparagine 484.

It belongs to the type-B carboxylesterase/lipase family. Isoform S is monomeric. Isoform T can form oligomers, including collagen-tailed forms. In terms of processing, the N-terminus is blocked. In terms of tissue distribution, liver and muscle contain both isoform T and isoform S. Venom gland predominantly contains isoform S.

Its subcellular location is the synapse. The protein localises to the secreted. It localises to the cell membrane. It catalyses the reaction acetylcholine + H2O = choline + acetate + H(+). Its activity is regulated as follows. Inhibited by active site inhibitors: edrophonium, trimethyl-(m-acetamidopheny1)-ammonium iodide, and trimethyl-(p-acetarnidopheny1)-ammonium iodide. Inhibited by both active and peripheral site inhibitors: decamethonium, and BW284c51. Inhibited by peripheral site inhibitors: snake acetylcholinesterase fasciculin-2, propidium, gallamine, D-tubocurarine, and tacrine. Also inhibited by antibodies Elec410 and Fab410. Its function is as follows. In muscle, it terminates signal transduction at the neuromuscular junction by rapid hydrolysis of the acetylcholine released into the synaptic cleft. In liver, its function is unclear: it could serve as a safeguard against any diffusion of acetylcholine from synapses into the circulation. In venom, its toxic role is unclear: it could result in less musculatory control by rapidly hydrolyzing acetylcholine, or that it works synergistically with alkaline phosphatase (ALP) in paralyzing prey through hypotension. The protein is Acetylcholinesterase (ACHE) of Bungarus fasciatus (Banded krait).